A 450-amino-acid chain; its full sequence is UPF0210 protein MK1214 (450 aa).

This sequence belongs to the UPF0210 family.

The polypeptide is UPF0210 protein MK1214 (Methanopyrus kandleri (strain AV19 / DSM 6324 / JCM 9639 / NBRC 100938)).